Reading from the N-terminus, the 795-residue chain is Protocadherin beta-5 (795 aa).

Positions methionine 1–alanine 30 are cleaved as a signal peptide. Residues valine 31–leucine 689 lie on the Extracellular side of the membrane. 5 consecutive Cadherin domains span residues isoleucine 35 to phenylalanine 133, methionine 138 to phenylalanine 242, tyrosine 247 to leucine 346, leucine 351 to phenylalanine 450, and tyrosine 455 to valine 560. An N-linked (GlcNAc...) asparagine glycan is attached at asparagine 169. An N6-acetyllysine modification is found at lysine 296. N-linked (GlcNAc...) asparagine glycans are attached at residues asparagine 417 and asparagine 435. Asparagine 566 is a glycosylation site (N-linked (GlcNAc...) asparagine). The region spanning glycine 567–leucine 670 is the Cadherin 6 domain. The helical transmembrane segment at valine 690 to valine 710 threads the bilayer. The Cytoplasmic segment spans residues arginine 711 to asparagine 795.

It is found in the cell membrane. Functionally, potential calcium-dependent cell-adhesion protein. May be involved in the establishment and maintenance of specific neuronal connections in the brain. The polypeptide is Protocadherin beta-5 (PCDHB5) (Pan troglodytes (Chimpanzee)).